A 370-amino-acid polypeptide reads, in one-letter code: Homospermidine synthase 1 (370 aa).

Belongs to the deoxyhypusine synthase family. Homotetramer. The cofactor is NAD(+). The N-terminus is blocked. Expressed in roots.

It carries out the reaction putrescine + spermidine = sym-homospermidine + propane-1,3-diamine. It participates in alkaloid biosynthesis; pyrrolizidine alkaloid biosynthesis. Catalyzes the transfer of an aminobutyl unit from spermidine onto putrescine. The resulting polyamine homospermidine is a precursor in the biosynthesis of pyrrolizidine alkaloids. In Senecio vernalis (Spring groundsel), this protein is Homospermidine synthase 1 (HSS1).